Consider the following 523-residue polypeptide: Probable 3-ketoacyl-CoA synthase 20 (523 aa).

The next 2 membrane-spanning stretches (helical) occupy residues 31-55 (IVAV…AAGG) and 78-96 (ALAV…YAAS). The region spanning 93-382 (YAASRPRPVY…RFLATVVLKR (290 aa)) is the FAE domain. Catalysis depends on residues Cys237, His317, His401, His405, and Asn438.

It belongs to the thiolase-like superfamily. Chalcone/stilbene synthases family. As to expression, highly expressed in leaf sheaths. Expressed in leaves, flag leaves and panicles.

Its subcellular location is the membrane. The enzyme catalyses a very-long-chain acyl-CoA + malonyl-CoA + H(+) = a very-long-chain 3-oxoacyl-CoA + CO2 + CoA. Its function is as follows. Contributes to fatty acids elongation. Plays a role in controlling leaf anatomy and plant architecture. The sequence is that of Probable 3-ketoacyl-CoA synthase 20 from Oryza sativa subsp. japonica (Rice).